The primary structure comprises 1205 residues: A disintegrin and metalloproteinase with thrombospondin motifs 2 (1205 aa).

Residues Met-1–Ala-28 form the signal peptide. Residues Arg-29–Arg-253 constitute a propeptide that is removed on maturation. Asn-104 and Asn-245 each carry an N-linked (GlcNAc...) asparagine glycan. A Peptidase M12B domain is found at Tyr-260–Pro-464. 10 disulfides stabilise this stretch: Cys-337–Cys-386, Cys-380–Cys-459, Cys-419–Cys-445, Cys-486–Cys-511, Cys-497–Cys-520, Cys-506–Cys-539, Cys-533–Cys-544, Cys-567–Cys-604, Cys-571–Cys-609, and Cys-582–Cys-594. Residue His-402 participates in Zn(2+) binding. Glu-403 is a catalytic residue. Zn(2+)-binding residues include His-406 and His-412. One can recognise a Disintegrin domain in the interval Gln-474 to Arg-554. One can recognise a TSP type-1 1 domain in the interval Asp-555–Pro-610. The Cell attachment site signature appears at Arg-685–Asp-687. Positions Lys-717 to Asp-845 are spacer. 3 consecutive TSP type-1 domains span residues Val-848 to Glu-906, Ser-908 to Leu-968, and Cys-969 to Pro-1023. N-linked (GlcNAc...) asparagine glycans are attached at residues Asn-942, Asn-943, and Asn-987. Disulfide bonds link Cys-981–Cys-1017, Cys-985–Cys-1022, and Cys-996–Cys-1006. Residue Asn-1025 is glycosylated (N-linked (GlcNAc...) asparagine). In terms of domain architecture, PLAC spans Ser-1053–Asp-1091. N-linked (GlcNAc...) asparagine glycans are attached at residues Asn-1092, Asn-1139, and Asn-1144. The segment at Gly-1163–Thr-1184 is disordered.

May belong to a multimeric complex. Binds specifically to collagen type XIV. Requires Zn(2+) as cofactor. In terms of processing, the N-terminus is blocked. The precursor is cleaved by a furin endopeptidase. Post-translationally, glycosylated. Can be O-fucosylated by POFUT2 on a serine or a threonine residue found within the consensus sequence C1-X(2)-(S/T)-C2-G of the TSP type-1 repeat domains where C1 and C2 are the first and second cysteine residue of the repeat, respectively. Fucosylated repeats can then be further glycosylated by the addition of a beta-1,3-glucose residue by the glucosyltransferase, B3GALTL. Fucosylation mediates the efficient secretion of ADAMTS family members. Can also be C-glycosylated with one or two mannose molecules on tryptophan residues within the consensus sequence W-X-X-W of the TPRs, and N-glycosylated. These other glycosylations can also facilitate secretion. As to expression, enzymatic activity is detected at high level in all type I collagen-rich tissues such as skin, bones, tendons and aorta and at low level in brain and thymus. The mRNA levels were disproportionately high in heart, liver, retina and muscle.

The protein localises to the secreted. Its subcellular location is the extracellular space. The protein resides in the extracellular matrix. It catalyses the reaction Cleaves the N-propeptide of collagen chain alpha1(I) at Pro-|-Gln and of alpha1(II) and alpha2(I) at Ala-|-Gln.. Cleaves the propeptides of type I and II collagen prior to fibril assembly. Does not act on type III collagen. Cleaves lysyl oxidase LOX at a site downstream of its propeptide cleavage site to produce a short LOX form with reduced collagen-binding activity. The sequence is that of A disintegrin and metalloproteinase with thrombospondin motifs 2 (ADAMTS2) from Bos taurus (Bovine).